The following is a 203-amino-acid chain: A-type ATP synthase subunit E (203 aa).

This sequence belongs to the V-ATPase E subunit family. Has multiple subunits with at least A(3), B(3), C, D, E, F, H, I and proteolipid K(x).

Its subcellular location is the cell membrane. Functionally, component of the A-type ATP synthase that produces ATP from ADP in the presence of a proton gradient across the membrane. This is A-type ATP synthase subunit E from Thermococcus kodakarensis (strain ATCC BAA-918 / JCM 12380 / KOD1) (Pyrococcus kodakaraensis (strain KOD1)).